Reading from the N-terminus, the 349-residue chain is Glycosyltransferase 8 domain-containing protein 2 (349 aa).

At 1–6 (MALLRK) the chain is on the cytoplasmic side. Residues 7–24 (INQVLLFLLIVTLCVILY) form a helical; Signal-anchor for type II membrane protein membrane-spanning segment. At 25-349 (KKVHKGTVPK…AGIFKLNHHS (325 aa)) the chain is on the lumenal side. Asn-234 carries N-linked (GlcNAc...) asparagine glycosylation.

It belongs to the glycosyltransferase 8 family.

It localises to the membrane. In Homo sapiens (Human), this protein is Glycosyltransferase 8 domain-containing protein 2 (GLT8D2).